We begin with the raw amino-acid sequence, 94 residues long: MLKPLGDRVVIEVIETEEKTASGIVLPDTAKEKPQEGRVVAVGKGRVLDSGECVAPEVEVGDRIIFSKYAGTEVKYDGKEYLILRESDILAVIG.

Belongs to the GroES chaperonin family. In terms of assembly, heptamer of 7 subunits arranged in a ring. Interacts with the chaperonin GroEL.

The protein localises to the cytoplasm. Together with the chaperonin GroEL, plays an essential role in assisting protein folding. The GroEL-GroES system forms a nano-cage that allows encapsulation of the non-native substrate proteins and provides a physical environment optimized to promote and accelerate protein folding. GroES binds to the apical surface of the GroEL ring, thereby capping the opening of the GroEL channel. This Geobacillus sp. (strain WCH70) protein is Co-chaperonin GroES.